Here is a 227-residue protein sequence, read N- to C-terminus: Urease accessory protein UreF 2 (227 aa).

It belongs to the UreF family. As to quaternary structure, ureD, UreF and UreG form a complex that acts as a GTP-hydrolysis-dependent molecular chaperone, activating the urease apoprotein by helping to assemble the nickel containing metallocenter of UreC. The UreE protein probably delivers the nickel.

The protein resides in the cytoplasm. In terms of biological role, required for maturation of urease via the functional incorporation of the urease nickel metallocenter. This Brucella anthropi (strain ATCC 49188 / DSM 6882 / CCUG 24695 / JCM 21032 / LMG 3331 / NBRC 15819 / NCTC 12168 / Alc 37) (Ochrobactrum anthropi) protein is Urease accessory protein UreF 2.